Consider the following 289-residue polypeptide: Rhodopsin (289 aa).

Topologically, residues Tyr-1–Ala-7 are extracellular. The helical transmembrane segment at Tyr-8–Val-32 threads the bilayer. Residues Thr-33 to Asn-44 are Cytoplasmic-facing. The chain crosses the membrane as a helical span at residues Tyr-45–Tyr-67. Residues Thr-68–Cys-81 lie on the Extracellular side of the membrane. Cysteines 81 and 158 form a disulfide. A helical membrane pass occupies residues Asn-82–Ile-104. Positions Glu-105–Trp-107 match the 'Ionic lock' involved in activated form stabilization motif. Over Glu-105–His-123 the chain is Cytoplasmic. The chain crosses the membrane as a helical span at residues Ala-124–Val-144. Over Gly-145–Ser-173 the chain is Extracellular. Residue Asn-171 is glycosylated (N-linked (GlcNAc...) asparagine). Residues Phe-174–Gly-195 form a helical membrane-spanning segment. Over Arg-196 to Arg-223 the chain is Cytoplasmic. A helical membrane pass occupies residues Met-224–Trp-245. The Extracellular portion of the chain corresponds to Ile-246 to Ile-257. Residues Phe-258–Cys-279 form a helical membrane-spanning segment. Position 267 is an N6-(retinylidene)lysine (Lys-267). The Cytoplasmic segment spans residues Met-280–Ile-289.

The protein belongs to the G-protein coupled receptor 1 family. Opsin subfamily. In terms of processing, phosphorylated on some or all of the serine and threonine residues present in the C-terminal region. Post-translationally, contains one covalently linked retinal chromophore.

The protein resides in the membrane. It is found in the cell projection. Its subcellular location is the cilium. The protein localises to the photoreceptor outer segment. Functionally, photoreceptor required for image-forming vision at low light intensity. While most salt water fish species use retinal as chromophore, most freshwater fish use 3-dehydroretinal, or a mixture of retinal and 3-dehydroretinal. Light-induced isomerization of 11-cis to all-trans retinal triggers a conformational change that activates signaling via G-proteins. Subsequent receptor phosphorylation mediates displacement of the bound G-protein alpha subunit by arrestin and terminates signaling. This is Rhodopsin (rho) from Cottinella boulengeri (Short-headed sculpin).